The following is a 347-amino-acid chain: NADH-ubiquinone oxidoreductase chain 2 (347 aa).

10 helical membrane passes run 3–23 (PMIF…VMMS), 25–45 (HWFM…PVLM), 59–79 (YFLT…INLM), 96–116 (MLIT…FWVP), 122–142 (IPLS…LSLL), 149–169 (INME…GWGG), 201–221 (SFLN…LLIF), 239–259 (IIAT…PLTG), 274–294 (NSTI…FFYI), and 326–346 (ILPL…FLML).

The protein belongs to the complex I subunit 2 family. Core subunit of respiratory chain NADH dehydrogenase (Complex I) which is composed of 45 different subunits. Interacts with TMEM242.

The protein localises to the mitochondrion inner membrane. It catalyses the reaction a ubiquinone + NADH + 5 H(+)(in) = a ubiquinol + NAD(+) + 4 H(+)(out). Core subunit of the mitochondrial membrane respiratory chain NADH dehydrogenase (Complex I) that is believed to belong to the minimal assembly required for catalysis. Complex I functions in the transfer of electrons from NADH to the respiratory chain. The immediate electron acceptor for the enzyme is believed to be ubiquinone. This is NADH-ubiquinone oxidoreductase chain 2 from Crocidura hildegardeae (Hildegarde's shrew).